Consider the following 734-residue polypeptide: MALRFPRFSQGLAQDPTTRRIWFGIATAHDFESHDDITEERLYQNIFASHFGQLAIIFLWTSGNLFHVAWQGNFESWVQDPLHVRPIAHAIWDPHFGQPAVEAFTRGGSLGPVNIAYSGVYQWWYTIGLRTNEDLYTGALFLLFLSAISLLAGWFHLQPKWKPSVSWFKNAESRLNHHLSGLFGVSSLAWTGHLVHVAIPGSRGEYVRWNNFLEVLPHPQGLGPLFTGQWNLYAQNPDSSSHLFGTSQGAGTAVLTLLGGFHPQTQSLWLTDIAHHHLAIAFIFLVAGHMYRTNFGIGHSIKDLLDAHIPPGGRLGRGHKGLYDTINNSLHFQLGLALASLGVITSLVAQHMYSLPAYAFIAQDFTTQAALYTHHQYIAGFIMTGAFAHGAIFFIRDYNPEQNEDNVLARMLDHKEAIISHLSWASLFLGFHTLGLYVHNDVMLAFGTPEKQILIEPIFAQWIQSAHGKTSYGFDVLLSSTSGPAFNAGRNIWLPGWLNAINENSNSLFLTIGPGDFLVHHAIALGLHTTTLILVKGALDARGSKLMPDKKDFGYSFPCDGPGRGGTCDISAWDAFYLAVFWMLNTIGWVTFYWHWKHITLWQGNVSQFNESSTYLMGWLRDYLWLNSSQLINGYNPFGMNSLSVWAWMFLFGHLVWATGFMFLIFWRGYWQELIETLAWAHERTPLANLIRWRDKPVALSIVQARLVGLAHFSVGYIFTYAAFLIASTSGKFG.

The next 8 helical transmembrane spans lie at I46 to A69, L135 to Q158, L175 to I199, I273 to Y291, L330 to Y353, A369 to I395, A417 to H439, and F517 to V535. Positions 559 and 568 each coordinate [4Fe-4S] cluster. Helical transmembrane passes span A575–W596 and L643–I665. The chlorophyll a site is built by H654, M662, and Y670. Residue W671 participates in phylloquinone binding. Residues L707–A727 form a helical membrane-spanning segment.

Belongs to the PsaA/PsaB family. The PsaA/B heterodimer binds the P700 chlorophyll special pair and subsequent electron acceptors. PSI consists of a core antenna complex that captures photons, and an electron transfer chain that converts photonic excitation into a charge separation. The eukaryotic PSI reaction center is composed of at least 11 subunits. Requires P700 is a chlorophyll a/chlorophyll a' dimer, A0 is one or more chlorophyll a, A1 is one or both phylloquinones and FX is a shared 4Fe-4S iron-sulfur center. as cofactor.

It localises to the plastid. It is found in the chloroplast thylakoid membrane. It catalyses the reaction reduced [plastocyanin] + hnu + oxidized [2Fe-2S]-[ferredoxin] = oxidized [plastocyanin] + reduced [2Fe-2S]-[ferredoxin]. In terms of biological role, psaA and PsaB bind P700, the primary electron donor of photosystem I (PSI), as well as the electron acceptors A0, A1 and FX. PSI is a plastocyanin-ferredoxin oxidoreductase, converting photonic excitation into a charge separation, which transfers an electron from the donor P700 chlorophyll pair to the spectroscopically characterized acceptors A0, A1, FX, FA and FB in turn. Oxidized P700 is reduced on the lumenal side of the thylakoid membrane by plastocyanin. This Jasminum nudiflorum (Winter jasmine) protein is Photosystem I P700 chlorophyll a apoprotein A2.